Consider the following 461-residue polypeptide: Putative forkhead-related transcription factor fkh-5 (461 aa).

The segment at residues 171-262 (QRPQLSYQLL…VEKEMIDVKT (92 aa)) is a DNA-binding region (fork-head).

It localises to the nucleus. In terms of biological role, transcription factor. Binds to DNA sequence motif 5'-CTGTTTCA-3'. Regulates expression of a class of small RNAs, known as 21U-RNAs, perhaps acting redundantly with fkh-4 and fkh-3. This is Putative forkhead-related transcription factor fkh-5 (fkh-5) from Caenorhabditis elegans.